We begin with the raw amino-acid sequence, 232 residues long: Large ribosomal subunit protein uL1 (232 aa).

This sequence belongs to the universal ribosomal protein uL1 family. Part of the 50S ribosomal subunit.

Binds directly to 23S rRNA. The L1 stalk is quite mobile in the ribosome, and is involved in E site tRNA release. Its function is as follows. Protein L1 is also a translational repressor protein, it controls the translation of the L11 operon by binding to its mRNA. The chain is Large ribosomal subunit protein uL1 from Bacteroides thetaiotaomicron (strain ATCC 29148 / DSM 2079 / JCM 5827 / CCUG 10774 / NCTC 10582 / VPI-5482 / E50).